The sequence spans 447 residues: UPF0210 protein LEUM_1180 (447 aa).

The protein belongs to the UPF0210 family. As to quaternary structure, homodimer.

In Leuconostoc mesenteroides subsp. mesenteroides (strain ATCC 8293 / DSM 20343 / BCRC 11652 / CCM 1803 / JCM 6124 / NCDO 523 / NBRC 100496 / NCIMB 8023 / NCTC 12954 / NRRL B-1118 / 37Y), this protein is UPF0210 protein LEUM_1180.